The sequence spans 778 residues: E3 UFM1-protein ligase 1 homolog (778 aa).

The interval 404-477 (NNLSTSHDAD…TVQQSAGNTR (74 aa)) is disordered. A compositionally biased stretch (basic residues) spans 445 to 457 (KSTKKHQRGRAAA).

It belongs to the UFL1 family.

Functionally, E3 UFM1-protein ligase that mediates ufmylation of target proteins. The polypeptide is E3 UFM1-protein ligase 1 homolog (Drosophila virilis (Fruit fly)).